Here is a 362-residue protein sequence, read N- to C-terminus: tRNA-specific 2-thiouridylase MnmA 1 (362 aa).

ATP-binding positions include 12-19 (GMSGGVDS) and Met38. Cys104 (nucleophile) is an active-site residue. Cysteines 104 and 200 form a disulfide. Gly128 contributes to the ATP binding site. An interaction with tRNA region spans residues 150 to 152 (KDQ). The Cysteine persulfide intermediate role is filled by Cys200. The segment at 306–307 (RY) is interaction with tRNA.

This sequence belongs to the MnmA/TRMU family.

The protein resides in the cytoplasm. The enzyme catalyses S-sulfanyl-L-cysteinyl-[protein] + uridine(34) in tRNA + AH2 + ATP = 2-thiouridine(34) in tRNA + L-cysteinyl-[protein] + A + AMP + diphosphate + H(+). Functionally, catalyzes the 2-thiolation of uridine at the wobble position (U34) of tRNA, leading to the formation of s(2)U34. This is tRNA-specific 2-thiouridylase MnmA 1 from Clostridium tetani (strain Massachusetts / E88).